A 509-amino-acid polypeptide reads, in one-letter code: Maturase K (509 aa).

Belongs to the intron maturase 2 family. MatK subfamily.

It is found in the plastid. The protein resides in the chloroplast. Functionally, usually encoded in the trnK tRNA gene intron. Probably assists in splicing its own and other chloroplast group II introns. In Nicotiana sylvestris (Wood tobacco), this protein is Maturase K.